We begin with the raw amino-acid sequence, 195 residues long: Kiwa protein KwaA (195 aa).

The next 3 helical transmembrane spans lie at 10 to 30, 46 to 66, and 117 to 137; these read GLYI…TAKI, LVLT…SIYF, and IAYL…DKYY.

It is found in the cell inner membrane. Its function is as follows. Component of antiviral defense system Kiwa, composed of KwaA and KwaB. Expression of Kiwa in E.coli (strain MG1655) confers resistance to phages lambda and SECphi18. This Escherichia coli O55:H7 (strain RM12579 / EPEC) protein is Kiwa protein KwaA.